Consider the following 264-residue polypeptide: S-adenosylmethionine decarboxylase proenzyme (264 aa).

The Schiff-base intermediate with substrate; via pyruvic acid role is filled by S112. S112 carries the pyruvic acid (Ser); by autocatalysis modification. H117 acts as the Proton acceptor; for processing activity in catalysis. C140 acts as the Proton donor; for catalytic activity in catalysis.

The protein belongs to the prokaryotic AdoMetDC family. Type 2 subfamily. In terms of assembly, heterooctamer of four alpha and four beta chains arranged as a tetramer of alpha/beta heterodimers. The cofactor is pyruvate. Is synthesized initially as an inactive proenzyme. Formation of the active enzyme involves a self-maturation process in which the active site pyruvoyl group is generated from an internal serine residue via an autocatalytic post-translational modification. Two non-identical subunits are generated from the proenzyme in this reaction, and the pyruvate is formed at the N-terminus of the alpha chain, which is derived from the carboxyl end of the proenzyme. The post-translation cleavage follows an unusual pathway, termed non-hydrolytic serinolysis, in which the side chain hydroxyl group of the serine supplies its oxygen atom to form the C-terminus of the beta chain, while the remainder of the serine residue undergoes an oxidative deamination to produce ammonia and the pyruvoyl group blocking the N-terminus of the alpha chain.

The catalysed reaction is S-adenosyl-L-methionine + H(+) = S-adenosyl 3-(methylsulfanyl)propylamine + CO2. The protein operates within amine and polyamine biosynthesis; S-adenosylmethioninamine biosynthesis; S-adenosylmethioninamine from S-adenosyl-L-methionine: step 1/1. Functionally, catalyzes the decarboxylation of S-adenosylmethionine to S-adenosylmethioninamine (dcAdoMet), the propylamine donor required for the synthesis of the polyamines spermine and spermidine from the diamine putrescine. In Salmonella choleraesuis (strain SC-B67), this protein is S-adenosylmethionine decarboxylase proenzyme.